The sequence spans 333 residues: Flotillin-like protein FloA (333 aa).

Residues 9-29 (IVLIVGGIIFLILFFHYVPFF) traverse the membrane as a helical segment.

Belongs to the flotillin-like FloA family. As to quaternary structure, homooligomerizes.

It is found in the cell membrane. Its subcellular location is the membrane raft. In terms of biological role, found in functional membrane microdomains (FMM) that may be equivalent to eukaryotic membrane rafts. FMMs are highly dynamic and increase in number as cells age. Flotillins are thought to be important factors in membrane fluidity. This chain is Flotillin-like protein FloA, found in Bacteroides thetaiotaomicron (strain ATCC 29148 / DSM 2079 / JCM 5827 / CCUG 10774 / NCTC 10582 / VPI-5482 / E50).